A 414-amino-acid polypeptide reads, in one-letter code: 2,3-diketo-5-methylthiopentyl-1-phosphate enolase (414 aa).

The active-site Proton acceptor is K99. Residues K148, 174-177 (KDDE), H265, G338, and 360-361 (GG) each bind substrate. 3 residues coordinate Mg(2+): K174, D176, and E177. K174 carries the post-translational modification N6-carboxylysine.

It belongs to the RuBisCO large chain family. Type IV subfamily. In terms of assembly, homodimer. Requires Mg(2+) as cofactor.

It catalyses the reaction 5-methylsulfanyl-2,3-dioxopentyl phosphate = 2-hydroxy-5-methylsulfanyl-3-oxopent-1-enyl phosphate. The protein operates within amino-acid biosynthesis; L-methionine biosynthesis via salvage pathway; L-methionine from S-methyl-5-thio-alpha-D-ribose 1-phosphate: step 3/6. In terms of biological role, catalyzes the enolization of 2,3-diketo-5-methylthiopentyl-1-phosphate (DK-MTP-1-P) into 2-hydroxy-3-keto-5-methylthiopentenyl-1-phosphate (HK-MTPenyl-1-P). This chain is 2,3-diketo-5-methylthiopentyl-1-phosphate enolase, found in Bacillus cereus (strain Q1).